The chain runs to 601 residues: NAD-dependent malic enzyme 59 kDa isoform, mitochondrial (601 aa).

Residues 1 to 18 (MWRVARSAASTFRRTRRL) constitute a mitochondrion transit peptide. The active-site Proton donor is the Tyr-129. Arg-182 provides a ligand contact to NAD(+). The Proton acceptor role is filled by Lys-200. Glu-271, Asp-272, and Asp-295 together coordinate a divalent metal cation. NAD(+) contacts are provided by Asp-295 and Asn-444.

This sequence belongs to the malic enzymes family. Heterodimer of two related subunits. The cofactor is Mg(2+). It depends on Mn(2+) as a cofactor.

The protein resides in the mitochondrion matrix. It catalyses the reaction (S)-malate + NAD(+) = pyruvate + CO2 + NADH. In Solanum tuberosum (Potato), this protein is NAD-dependent malic enzyme 59 kDa isoform, mitochondrial.